Consider the following 164-residue polypeptide: V-type proton ATPase subunit c' (164 aa).

At 1–15 (MTDDLVNEYAPAFAP) the chain is on the lumenal side. A helical membrane pass occupies residues 16–36 (FFGFAGCAAAMILSSLGAAIG). At 37-58 (TAKSGIGISGIGTFRPELIMKS) the chain is on the cytoplasmic side. Residues 59 to 79 (LIPVVMSGILAVYGLVVAVLV) traverse the membrane as a helical segment. At 80 to 97 (AGGLSPTEEYTLFNGFMH) the chain is on the lumenal side. Residues 98-118 (LAAGLCVGFACLSSGYAIGIV) traverse the membrane as a helical segment. At 119–135 (GDVGVRKFMHQPRLFVG) the chain is on the cytoplasmic side. The helical transmembrane segment at 136–156 (IVLILIFAEVLGLYGMIIALI) threads the bilayer. Over 157 to 164 (LNTRGSGN) the chain is Lumenal.

Belongs to the V-ATPase proteolipid subunit family. V-ATPase is a heteromultimeric enzyme composed of a peripheral catalytic V1 complex (components A to H) attached to an integral membrane V0 proton pore complex (components: a, c, c', c'', d, e, f and VOA1). The decameric c-ring forms the proton-conducting pore, and is composed of eight proteolipid subunits c, one subunit c' and one subunit c''.

It is found in the vacuole membrane. Its function is as follows. Proton-conducting pore forming subunit of the V0 complex of vacuolar(H+)-ATPase (V-ATPase), a multisubunit enzyme composed of a peripheral complex (V1) that hydrolyzes ATP and a membrane integral complex (V0) that translocates protons. V-ATPase is responsible for acidifying and maintaining the pH of intracellular compartments. In Eremothecium gossypii (strain ATCC 10895 / CBS 109.51 / FGSC 9923 / NRRL Y-1056) (Yeast), this protein is V-type proton ATPase subunit c' (VMA11).